We begin with the raw amino-acid sequence, 289 residues long: Thiazole synthase (289 aa).

Lys132 (schiff-base intermediate with DXP) is an active-site residue. Residues Gly193, 219-220 (AG), and 241-242 (NT) contribute to the 1-deoxy-D-xylulose 5-phosphate site.

Belongs to the ThiG family. Homotetramer. Forms heterodimers with either ThiH or ThiS.

It localises to the cytoplasm. It catalyses the reaction [ThiS sulfur-carrier protein]-C-terminal-Gly-aminoethanethioate + 2-iminoacetate + 1-deoxy-D-xylulose 5-phosphate = [ThiS sulfur-carrier protein]-C-terminal Gly-Gly + 2-[(2R,5Z)-2-carboxy-4-methylthiazol-5(2H)-ylidene]ethyl phosphate + 2 H2O + H(+). The protein operates within cofactor biosynthesis; thiamine diphosphate biosynthesis. In terms of biological role, catalyzes the rearrangement of 1-deoxy-D-xylulose 5-phosphate (DXP) to produce the thiazole phosphate moiety of thiamine. Sulfur is provided by the thiocarboxylate moiety of the carrier protein ThiS. In vitro, sulfur can be provided by H(2)S. The polypeptide is Thiazole synthase (Rhodospirillum rubrum (strain ATCC 11170 / ATH 1.1.1 / DSM 467 / LMG 4362 / NCIMB 8255 / S1)).